A 318-amino-acid polypeptide reads, in one-letter code: uncharacterized protein (318 aa).

This sequence to A.aeolicus AA07 and AA11.

This is an uncharacterized protein from Aquifex aeolicus (strain VF5).